The primary structure comprises 348 residues: Putative methylesterase 14, chloroplastic (348 aa).

Disordered stretches follow at residues 1-29 (MGNK…MNRS) and 60-80 (GSMS…SDPF). A chloroplast-targeting transit peptide spans 1–76 (MGNKIISMMK…GSTSTRKRTL (76 aa)). At Ser-77 the chain carries Phosphoserine. The active-site Acyl-ester intermediate is Ser-172. Catalysis depends on charge relay system residues Asp-299 and His-327.

Belongs to the AB hydrolase superfamily. Methylesterase family.

It localises to the plastid. It is found in the chloroplast. Functionally, putative methylesterase. The chain is Putative methylesterase 14, chloroplastic from Arabidopsis thaliana (Mouse-ear cress).